Here is a 459-residue protein sequence, read N- to C-terminus: MAHSRARRRKRASATQLYQTCKLTGTCPPDVIPKVEHNTIADQILKWGSLGVFFGGLGIGTGSGTGGRTGYVPLGTSAKPSITSGPMARPPVVVEPVAPSDPSIVSLIEESAIINAGAPEIVPPAHGGFTITSSETTTPAILDVSVTSHTTTSIFRNPVFTEPSVTQPQPPVEANGHILISAPTITSHPIEEIPLDTFVISSSDSGPTSSTPVPGTAPRPRVGLYSRALHQVQVTDPAFLSTPQRLITYDNPVYEGEDVSVQFSHDSIHNAPDEAFMDIIRLHRPAIASRRGLVRYSRIGQRGSMHTRSGKHIGARIHYFYDISPIAQAAEEIEMHPLVAAQDDTFDIYAESFEPDINPTQHPVTNISDTYLTSTPNTVTQPWGNTTVPLSIPNDLFLQSGPDITFPTAPMGTPFSPVTPALPTGPVFITGSGFYLHPAWYFARKRRKRIPLFFSDVAA.

The Nuclear localization signal motif lies at 1 to 12; the sequence is MAHSRARRRKRA. Cys21 and Cys27 form a disulfide bridge. The short motif at 442–450 is the Nuclear localization signal element; it reads FARKRRKRI.

The protein belongs to the papillomaviridae L2 protein family. In terms of assembly, interacts with major capsid protein L1. Interacts with E2; this interaction inhibits E2 transcriptional activity but not the DNA replication function E2. Interacts with host GADD45GIP1. Interacts with host HSPA8; this interaction is required for L2 nuclear translocation. Interacts with host importins KPNB2 and KPNB3. Forms a complex with importin alpha2-beta1 heterodimers via interaction with the importin alpha2 adapter. Interacts with host DYNLT1; this interaction is essential for virus intracellular transport during entry. Interacts (via C-terminus) with host retromer subunits VPS35 and VPS29. In terms of processing, highly phosphorylated.

The protein localises to the virion. The protein resides in the host nucleus. It is found in the host early endosome. Its subcellular location is the host Golgi apparatus. Functionally, minor protein of the capsid that localizes along the inner surface of the virion, within the central cavities beneath the L1 pentamers. Plays a role in capsid stabilization through interaction with the major capsid protein L1. Once the virion enters the host cell, L2 escorts the genomic DNA into the nucleus by promoting escape from the endosomal compartments and traffic through the host Golgi network. Mechanistically, the C-terminus of L2 possesses a cell-penetrating peptide that protudes from the host endosome, interacts with host cytoplasmic retromer cargo and thereby mediates the capsid delivery to the host trans-Golgi network. Plays a role through its interaction with host dynein in the intracellular microtubule-dependent transport of viral capsid toward the nucleus. Mediates the viral genome import into the nucleus through binding to host importins. Once within the nucleus, L2 localizes viral genomes to host PML bodies in order to activate early gene expression for establishment of infection. Later on, promotes late gene expression by interacting with the viral E2 protein and by inhibiting its transcriptional activation functions. During virion assembly, encapsidates the genome by direct interaction with the viral DNA. This Homo sapiens (Human) protein is Minor capsid protein L2.